A 211-amino-acid polypeptide reads, in one-letter code: Small ribosomal subunit protein uS5 (211 aa).

The region spanning 58 to 121 is the S5 DRBM domain; that stretch reads FEERIVKLKR…KKAHNSIHTV (64 aa).

This sequence belongs to the universal ribosomal protein uS5 family. In terms of assembly, part of the 30S ribosomal subunit. Contacts proteins S4 and S8.

Functionally, with S4 and S12 plays an important role in translational accuracy. Located at the back of the 30S subunit body where it stabilizes the conformation of the head with respect to the body. The protein is Small ribosomal subunit protein uS5 of Mycoplasma genitalium (strain ATCC 33530 / DSM 19775 / NCTC 10195 / G37) (Mycoplasmoides genitalium).